Consider the following 155-residue polypeptide: Pathogenesis-related protein 2 (155 aa).

Belongs to the BetVI family.

This is Pathogenesis-related protein 2 from Phaseolus vulgaris (Kidney bean).